Here is a 487-residue protein sequence, read N- to C-terminus: GDP-Man:Man(3)GlcNAc(2)-PP-Dol alpha-1,2-mannosyltransferase (487 aa).

Residues 1–16 (MAGILCLCGMMRLLTA) lie on the Lumenal side of the membrane. The chain crosses the membrane as a helical span at residues 17–37 (LFIPVLIASIGLCLVLVLLFI). Residues 38–231 (CTRLWIQRKK…SNNPVLSRLK (194 aa)) lie on the Cytoplasmic side of the membrane. Residues 232–252 (LIYYYLFAVIYGWVGSCSDVI) constitute an intramembrane region (helical). The Cytoplasmic portion of the chain corresponds to 253-394 (MVNSTWTFAH…IGLHTMWNEH (142 aa)). The segment at residues 395-415 (FGIGIVECMAAGTIILAHNSG) is an intramembrane region (helical). At 416 to 487 (GPKLDIVVPY…FLASSEPLFM (72 aa)) the chain is on the cytoplasmic side.

Belongs to the glycosyltransferase group 1 family. Glycosyltransferase 4 subfamily.

The protein resides in the endoplasmic reticulum membrane. The catalysed reaction is an alpha-D-Man-(1-&gt;3)-[alpha-D-Man-(1-&gt;6)]-beta-D-Man-(1-&gt;4)-beta-D-GlcNAc-(1-&gt;4)-alpha-D-GlcNAc-diphospho-di-trans,poly-cis-dolichol + 2 GDP-alpha-D-mannose = an alpha-D-Man-(1-&gt;2)-alpha-D-Man-(1-&gt;2)-alpha-D-Man-(1-&gt;3)-[alpha-D-Man-(1-&gt;6)]-beta-D-Man-(1-&gt;4)-beta-D-GlcNAc-(1-&gt;4)-alpha-D-GlcNAc-diphospho-di-trans,poly-cis-dolichol + 2 GDP + 2 H(+). Its pathway is protein modification; protein glycosylation. Functionally, GDP-Man:Man(3)GlcNAc(2)-PP-Dol alpha-1,2-mannosyltransferase that operates in the biosynthetic pathway of dolichol-linked oligosaccharides, the glycan precursors employed in protein asparagine (N)-glycosylation. The assembly of dolichol-linked oligosaccharides begins on the cytosolic side of the endoplasmic reticulum membrane and finishes in its lumen. The sequential addition of sugars to dolichol pyrophosphate produces dolichol-linked oligosaccharides containing fourteen sugars, including two GlcNAcs, nine mannoses and three glucoses. Once assembled, the oligosaccharide is transferred from the lipid to nascent proteins by oligosaccharyltransferases. Catalyzes, on the cytoplasmic face of the endoplasmic reticulum, the addition of the fourth and fifth mannose residues to the dolichol-linked oligosaccharide chain, to produce Man(5)GlcNAc(2)-PP-dolichol core oligosaccharide. Man(5)GlcNAc(2)-PP-dolichol is a substrate for ALG3, the following enzyme in the biosynthetic pathway. This is GDP-Man:Man(3)GlcNAc(2)-PP-Dol alpha-1,2-mannosyltransferase (alg11) from Xenopus tropicalis (Western clawed frog).